A 127-amino-acid polypeptide reads, in one-letter code: Small ribosomal subunit protein uS11 (127 aa).

Belongs to the universal ribosomal protein uS11 family. In terms of assembly, part of the 30S ribosomal subunit. Interacts with proteins S7 and S18. Binds to IF-3.

Functionally, located on the platform of the 30S subunit, it bridges several disparate RNA helices of the 16S rRNA. Forms part of the Shine-Dalgarno cleft in the 70S ribosome. The chain is Small ribosomal subunit protein uS11 from Rhodopirellula baltica (strain DSM 10527 / NCIMB 13988 / SH1).